The following is a 276-amino-acid chain: Lyso-ornithine lipid O-acyltransferase (276 aa).

A helical transmembrane segment spans residues 25–47; sequence LALRGGAMALVLMAGLTLHLAVR.

Belongs to the 1-acyl-sn-glycerol-3-phosphate acyltransferase family. OlsA subfamily.

The protein localises to the membrane. The catalysed reaction is a lyso-ornithine lipid + a fatty acyl-[ACP] = an N(2)-[(3R)-3-(acyloxy)acyl]-L-ornithine lipid + holo-[ACP]. The enzyme catalyses a fatty acyl-[ACP] + a 1-acyl-sn-glycero-3-phosphate = a 1,2-diacyl-sn-glycero-3-phosphate + holo-[ACP]. The protein operates within lipid metabolism. Its pathway is phospholipid metabolism. Catalyzes the second step in the formation of ornithine lipids, which are phosphorus-free membrane lipids. Uses acyl-acyl carrier protein (acyl-AcpP) as an acyl donor and converts lyso-ornithine lipid (LOL) into ornithine lipid (OL). It can also act as an alternate acyl-sn-glycerol-3-phosphate acyltransferase (AGPAT) to ensure glycerophospholipid production. The chain is Lyso-ornithine lipid O-acyltransferase from Rhodobacter capsulatus (strain ATCC BAA-309 / NBRC 16581 / SB1003).